We begin with the raw amino-acid sequence, 90 residues long: Non-structural protein NS-S (90 aa).

The segment at 4–29 (KLSLPGKNLKMQKRRWKPTRMMLTRA) is nucleolar signal.

Belongs to the hantavirus NS-S protein family. As to quaternary structure, interacts with host MAVS; this interaction may reduce MAVS ubiquitination.

It is found in the host cytoplasm. It localises to the host perinuclear region. The protein localises to the host nucleus. Its function is as follows. Antagonizes host type-I IFN signaling pathway. The polypeptide is Non-structural protein NS-S (N) (Homo sapiens (Human)).